Here is a 158-residue protein sequence, read N- to C-terminus: Pleckstrin homology domain-containing family J member 1 (158 aa).

Residues 15–108 (PTQRAAELGM…WIDAIIKASY (94 aa)) enclose the PH domain.

In Danio rerio (Zebrafish), this protein is Pleckstrin homology domain-containing family J member 1 (plekhj1).